Consider the following 417-residue polypeptide: 3-oxo-isoapionate-4-phosphate decarboxylase (417 aa).

Mg(2+)-binding residues include lysine 177, aspartate 179, and glutamate 180. Lysine 177 carries the N6-carboxylysine modification.

This sequence belongs to the RuBisCO large chain family. Mg(2+) serves as cofactor.

The catalysed reaction is 3-oxoisoapionate 4-phosphate + H(+) = L-erythrulose 1-phosphate + CO2. It functions in the pathway carbohydrate metabolism. In terms of biological role, involved in catabolism of D-apiose. Catalyzes the decarboxylation of 3-oxo-isoapionate 4-phosphate to L-erythrulose 1-phosphate. This Rhizobium etli (strain ATCC 51251 / DSM 11541 / JCM 21823 / NBRC 15573 / CFN 42) protein is 3-oxo-isoapionate-4-phosphate decarboxylase.